The chain runs to 61 residues: Photosystem II reaction center protein K (61 aa).

A propeptide spanning residues 1–24 (MPNILSLTCICFNSVIYPTSFFFA) is cleaved from the precursor. Residues 32-52 (IFNPIVDFMPVIPVLFFLLAF) form a helical membrane-spanning segment.

The protein belongs to the PsbK family. In terms of assembly, PSII is composed of 1 copy each of membrane proteins PsbA, PsbB, PsbC, PsbD, PsbE, PsbF, PsbH, PsbI, PsbJ, PsbK, PsbL, PsbM, PsbT, PsbX, PsbY, PsbZ, Psb30/Ycf12, at least 3 peripheral proteins of the oxygen-evolving complex and a large number of cofactors. It forms dimeric complexes.

It localises to the plastid. The protein resides in the chloroplast thylakoid membrane. One of the components of the core complex of photosystem II (PSII). PSII is a light-driven water:plastoquinone oxidoreductase that uses light energy to abstract electrons from H(2)O, generating O(2) and a proton gradient subsequently used for ATP formation. It consists of a core antenna complex that captures photons, and an electron transfer chain that converts photonic excitation into a charge separation. The polypeptide is Photosystem II reaction center protein K (Oryza nivara (Indian wild rice)).